A 561-amino-acid polypeptide reads, in one-letter code: 3beta-hydroxysteroid-dehydrogenase/decarboxylase isoform 3 (561 aa).

Lys166 is a binding site for NAD(+). The Reticulon domain occupies 379–561; it reads VADILLWRNE…SDASSKPMFM (183 aa). The next 3 membrane-spanning stretches (helical) occupy residues 392 to 412, 420 to 440, and 504 to 524; these read FVSF…GNTF, LFIF…IFGF, and SLAA…FIYE.

Belongs to the 3-beta-HSD family.

It is found in the endoplasmic reticulum membrane. The catalysed reaction is a 3beta-hydroxysteroid-4alpha-carboxylate + NADP(+) = a 3-oxosteroid + CO2 + NADPH. The enzyme catalyses a 3beta-hydroxysteroid-4alpha-carboxylate + NAD(+) = a 3-oxosteroid + CO2 + NADH. The protein operates within steroid biosynthesis; zymosterol biosynthesis; zymosterol from lanosterol: step 4/6. The sequence is that of 3beta-hydroxysteroid-dehydrogenase/decarboxylase isoform 3 (3BETAHSD/D3) from Arabidopsis thaliana (Mouse-ear cress).